A 421-amino-acid polypeptide reads, in one-letter code: Phosphoribosylamine--glycine ligase (421 aa).

The ATP-grasp domain occupies 108-314; sequence KEIMVKYNVP…FAQNIDDIMM (207 aa). 134-195 contributes to the ATP binding site; that stretch reads IEEQGAPIVV…EEFLDGEEFS (62 aa). The Mg(2+) site is built by Glu-284 and Asn-286.

This sequence belongs to the GARS family. The cofactor is Mg(2+). Mn(2+) serves as cofactor.

The catalysed reaction is 5-phospho-beta-D-ribosylamine + glycine + ATP = N(1)-(5-phospho-beta-D-ribosyl)glycinamide + ADP + phosphate + H(+). The protein operates within purine metabolism; IMP biosynthesis via de novo pathway; N(1)-(5-phospho-D-ribosyl)glycinamide from 5-phospho-alpha-D-ribose 1-diphosphate: step 2/2. The polypeptide is Phosphoribosylamine--glycine ligase (Streptococcus pyogenes serotype M3 (strain SSI-1)).